The chain runs to 147 residues: Hemoglobin subunit beta (147 aa).

Val2 carries the post-translational modification N-acetylvaline. One can recognise a Globin domain in the interval His3–His147. The residue at position 13 (Thr13) is a Phosphothreonine. At Ser45 the chain carries Phosphoserine. At Lys60 the chain carries N6-acetyllysine. Residue His64 participates in heme b binding. Lys83 carries the post-translational modification N6-acetyllysine. His93 serves as a coordination point for heme b. Cys94 carries the post-translational modification S-nitrosocysteine. Lys145 is modified (N6-acetyllysine).

Belongs to the globin family. Heterotetramer of two alpha chains and two beta chains. Red blood cells.

Its function is as follows. Involved in oxygen transport from the lung to the various peripheral tissues. In Tachyglossus aculeatus aculeatus (Southeast Australian short-beaked echidna), this protein is Hemoglobin subunit beta (HBB).